The sequence spans 143 residues: General odorant-binding protein 28a (143 aa).

The N-terminal stretch at M1–A21 is a signal peptide. Intrachain disulfides connect C38–C69, C65–C123, and C113–C132.

Expressed in antenna, mostly on the medial and posterior surface of the third antennal segment.

It localises to the secreted. This Drosophila melanogaster (Fruit fly) protein is General odorant-binding protein 28a (Obp28a).